A 603-amino-acid polypeptide reads, in one-letter code: Elongation factor 4 (603 aa).

One can recognise a tr-type G domain in the interval 9-191; it reads SNIRNFSIIA…RIVRQIPPPK (183 aa). Residues 21–26 and 138–141 each bind GTP; these read DHGKST and NKID.

Belongs to the TRAFAC class translation factor GTPase superfamily. Classic translation factor GTPase family. LepA subfamily.

It is found in the cell inner membrane. It catalyses the reaction GTP + H2O = GDP + phosphate + H(+). Its function is as follows. Required for accurate and efficient protein synthesis under certain stress conditions. May act as a fidelity factor of the translation reaction, by catalyzing a one-codon backward translocation of tRNAs on improperly translocated ribosomes. Back-translocation proceeds from a post-translocation (POST) complex to a pre-translocation (PRE) complex, thus giving elongation factor G a second chance to translocate the tRNAs correctly. Binds to ribosomes in a GTP-dependent manner. The protein is Elongation factor 4 of Idiomarina loihiensis (strain ATCC BAA-735 / DSM 15497 / L2-TR).